A 258-amino-acid polypeptide reads, in one-letter code: Peptidase inhibitor 15 (258 aa).

The N-terminal stretch at 1–21 is a signal peptide; sequence MTIIAAISCVFLFSILCETSA. Positions 22 to 60 are excised as a propeptide; the sequence is LVLPNSTDLLLSNNNFTDIETALAAHLDSAKIPKARRKR. N-linked (GlcNAc...) asparagine glycosylation is found at Asn26, Asn36, and Asn124. Residues 71 to 211 form the SCP domain; sequence LDYHNQVRGK…RRAVYLVCNY (141 aa).

This sequence belongs to the CRISP family.

It is found in the secreted. Serine protease inhibitor which displays weak inhibitory activity against trypsin. May play a role in facial patterning during embryonic development. This chain is Peptidase inhibitor 15 (PI15), found in Gallus gallus (Chicken).